A 563-amino-acid chain; its full sequence is Arginine--tRNA ligase (563 aa).

Positions 120–130 match the 'HIGH' region motif; it reads PNIAKPFHIGH.

This sequence belongs to the class-I aminoacyl-tRNA synthetase family. As to quaternary structure, monomer.

The protein resides in the cytoplasm. It catalyses the reaction tRNA(Arg) + L-arginine + ATP = L-arginyl-tRNA(Arg) + AMP + diphosphate. The protein is Arginine--tRNA ligase of Clostridium botulinum (strain Okra / Type B1).